Consider the following 288-residue polypeptide: Bifunctional protein FolD (288 aa).

Residues 164-166 and Val230 contribute to the NADP(+) site; that span reads GRS.

It belongs to the tetrahydrofolate dehydrogenase/cyclohydrolase family. In terms of assembly, homodimer.

The catalysed reaction is (6R)-5,10-methylene-5,6,7,8-tetrahydrofolate + NADP(+) = (6R)-5,10-methenyltetrahydrofolate + NADPH. The enzyme catalyses (6R)-5,10-methenyltetrahydrofolate + H2O = (6R)-10-formyltetrahydrofolate + H(+). Its pathway is one-carbon metabolism; tetrahydrofolate interconversion. Its function is as follows. Catalyzes the oxidation of 5,10-methylenetetrahydrofolate to 5,10-methenyltetrahydrofolate and then the hydrolysis of 5,10-methenyltetrahydrofolate to 10-formyltetrahydrofolate. This chain is Bifunctional protein FolD, found in Thermomicrobium roseum (strain ATCC 27502 / DSM 5159 / P-2).